Here is a 98-residue protein sequence, read N- to C-terminus: Cell division topological specificity factor (98 aa).

It belongs to the MinE family.

Prevents the cell division inhibition by proteins MinC and MinD at internal division sites while permitting inhibition at polar sites. This ensures cell division at the proper site by restricting the formation of a division septum at the midpoint of the long axis of the cell. The sequence is that of Cell division topological specificity factor from Moorella thermoacetica (strain ATCC 39073 / JCM 9320).